The following is a 403-amino-acid chain: Phosphoglycerate kinase (403 aa).

Residues 21 to 23, R36, 59 to 62, R119, and R159 each bind substrate; these read DFN and HLGR. Residues K214, G301, E332, and 359-362 each bind ATP; that span reads GGDS.

It belongs to the phosphoglycerate kinase family. Monomer.

Its subcellular location is the cytoplasm. It carries out the reaction (2R)-3-phosphoglycerate + ATP = (2R)-3-phospho-glyceroyl phosphate + ADP. It participates in carbohydrate degradation; glycolysis; pyruvate from D-glyceraldehyde 3-phosphate: step 2/5. This is Phosphoglycerate kinase from Lactobacillus delbrueckii subsp. bulgaricus (strain ATCC 11842 / DSM 20081 / BCRC 10696 / JCM 1002 / NBRC 13953 / NCIMB 11778 / NCTC 12712 / WDCM 00102 / Lb 14).